A 388-amino-acid polypeptide reads, in one-letter code: Mannitol-1-phosphate 5-dehydrogenase (388 aa).

An NAD(+)-binding site is contributed by 5 to 16 (AIQFGGGNIGRG). Lys213 is a catalytic residue.

It belongs to the mannitol dehydrogenase family. As to quaternary structure, monomer.

It catalyses the reaction D-mannitol 1-phosphate + NAD(+) = beta-D-fructose 6-phosphate + NADH + H(+). Catalyzes the NAD(H)-dependent interconversion of D-fructose 6-phosphate and D-mannitol 1-phosphate in the mannitol metabolic pathway. Has a strong preference for NADH over NADPH. Required for protection of conidiospores against exogenous stresses such as high temperatures and an oxidative environment. The protein is Mannitol-1-phosphate 5-dehydrogenase (mpdA) of Aspergillus niger.